The following is a 493-amino-acid chain: Glutamyl-tRNA(Gln) amidotransferase subunit A (493 aa).

Residues Lys81 and Ser156 each act as charge relay system in the active site. Ser180 acts as the Acyl-ester intermediate in catalysis.

It belongs to the amidase family. GatA subfamily. As to quaternary structure, heterotrimer of A, B and C subunits.

The enzyme catalyses L-glutamyl-tRNA(Gln) + L-glutamine + ATP + H2O = L-glutaminyl-tRNA(Gln) + L-glutamate + ADP + phosphate + H(+). In terms of biological role, allows the formation of correctly charged Gln-tRNA(Gln) through the transamidation of misacylated Glu-tRNA(Gln) in organisms which lack glutaminyl-tRNA synthetase. The reaction takes place in the presence of glutamine and ATP through an activated gamma-phospho-Glu-tRNA(Gln). This is Glutamyl-tRNA(Gln) amidotransferase subunit A from Mycolicibacterium paratuberculosis (strain ATCC BAA-968 / K-10) (Mycobacterium paratuberculosis).